The primary structure comprises 138 residues: Single-stranded DNA-binding protein 3 (138 aa).

Positions 1 to 104 (MINNIVLVGR…VVAENFQLLE (104 aa)) constitute an SSB domain. Residues 105-121 (SRNSQQQTNQSGNSSNS) show a composition bias toward low complexity. Positions 105-138 (SRNSQQQTNQSGNSSNSYFGNANKMDISDDDLPF) are disordered. The Important for interaction with partner proteins motif lies at 133-138 (DDDLPF).

In terms of assembly, homotetramer.

In terms of biological role, plays an important role in DNA replication, recombination and repair. Binds to ssDNA and to an array of partner proteins to recruit them to their sites of action during DNA metabolism. In Streptococcus agalactiae serotype V (strain ATCC BAA-611 / 2603 V/R), this protein is Single-stranded DNA-binding protein 3 (ssb3).